A 302-amino-acid chain; its full sequence is MRNRTLADLDRVVALGGGHGLGRVLSSLSSLGSRLTGIVTTTDNGGSTGRIRRSEGGIAWGDMRNCLNQLITEPSVASAMFEYRFGGNGELSGHNLGNLMLKALDHLSVRPLEAINLIRNLLKVDAQLIPMSELPVDLMAIDDQGHEIYGEVNIDQLATPPQEIMLTPNVPATREAVQAINDADLILIGPGSFYTSLMPCLLLDELAQALRRTPAPMVYIGNLGRELSLPAASLTLVDKLAMMEQYIGKKVIDTVVVGPRVDVSAVNDRLVIQEVLEASDIPYRHDRQLLHNALEKALQALG.

It belongs to the gluconeogenesis factor family.

It localises to the cytoplasm. Its function is as follows. Required for morphogenesis under gluconeogenic growth conditions. This is Putative gluconeogenesis factor (ybhK) from Salmonella typhi.